The following is a 550-amino-acid chain: DNA-directed RNA polymerase subunit alpha (550 aa).

Positions 1 to 333 are alpha N-terminal domain (alpha-NTD); the sequence is MTIYPNLKKI…QENNLFRSEK (333 aa). An insert region spans residues 185–258; that stretch reads TTLKKRNILL…TSLGHDTVSN (74 aa). An alpha C-terminal domain (alpha-CTD) region spans residues 378–550; sequence FLNQSLGQNK…SLTFEYARKF (173 aa).

This sequence belongs to the RNA polymerase alpha chain family. As to quaternary structure, in plastids the minimal PEP RNA polymerase catalytic core is composed of four subunits: alpha, beta, beta', and beta''. When a (nuclear-encoded) sigma factor is associated with the core the holoenzyme is formed, which can initiate transcription.

Its subcellular location is the plastid. The protein localises to the chloroplast. It carries out the reaction RNA(n) + a ribonucleoside 5'-triphosphate = RNA(n+1) + diphosphate. DNA-dependent RNA polymerase catalyzes the transcription of DNA into RNA using the four ribonucleoside triphosphates as substrates. The chain is DNA-directed RNA polymerase subunit alpha (rpoA) from Chlamydomonas reinhardtii (Chlamydomonas smithii).